The sequence spans 238 residues: Uridylate kinase (238 aa).

Lys10–Gly13 contacts ATP. Positions Gly18 to Gly23 are involved in allosteric activation by GTP. A UMP-binding site is contributed by Gly52. Residues Gly53 and Arg57 each coordinate ATP. Residues Asp73 and Thr134 to Thr141 each bind UMP. Positions 161, 167, and 170 each coordinate ATP.

Belongs to the UMP kinase family. As to quaternary structure, homohexamer.

Its subcellular location is the cytoplasm. It catalyses the reaction UMP + ATP = UDP + ADP. Its pathway is pyrimidine metabolism; CTP biosynthesis via de novo pathway; UDP from UMP (UMPK route): step 1/1. Its activity is regulated as follows. Allosterically activated by GTP. Inhibited by UTP. Catalyzes the reversible phosphorylation of UMP to UDP. The sequence is that of Uridylate kinase from Campylobacter fetus subsp. fetus (strain 82-40).